Consider the following 235-residue polypeptide: Derlin-3 (235 aa).

Residues M1 to A22 lie on the Cytoplasmic side of the membrane. Residues A23–F43 form a helical membrane-spanning segment. The Lumenal segment spans residues N44–V58. Residues T59–F79 form a helical membrane-spanning segment. Residues R80–V98 are Cytoplasmic-facing. Residues F99–F119 traverse the membrane as a helical segment. The Lumenal portion of the chain corresponds to L120–A157. A helical membrane pass occupies residues L158 to V178. The Cytoplasmic portion of the chain corresponds to G179–Q235. Residues P216–Q235 form a disordered region. Over residues E223–Q235 the composition is skewed to pro residues.

Belongs to the derlin family. As to quaternary structure, forms homo- and heterooligomers with DERL2 and, to a lesser extent, with DERL1. Interacts with VCP and EDEM1. Interacts with SELENOK and SELENOS. Interacts with the signal recognition particle/SRP and the SRP receptor; in the process of endoplasmic reticulum stress-induced pre-emptive quality control. In terms of tissue distribution, unlike DERL1 and DERL2, restricted to several tissues. Expressed at high levels in placenta, pancreas, spleen and small intestine.

The protein resides in the endoplasmic reticulum membrane. Its function is as follows. Functional component of endoplasmic reticulum-associated degradation (ERAD) for misfolded lumenal glycoproteins, but not that of misfolded nonglycoproteins. May act by forming a channel that allows the retrotranslocation of misfolded glycoproteins into the cytosol where they are ubiquitinated and degraded by the proteasome. May mediate the interaction between VCP and the misfolded glycoproteins. May be involved in endoplasmic reticulum stress-induced pre-emptive quality control, a mechanism that selectively attenuates the translocation of newly synthesized proteins into the endoplasmic reticulum and reroutes them to the cytosol for proteasomal degradation. The polypeptide is Derlin-3 (Homo sapiens (Human)).